Reading from the N-terminus, the 364-residue chain is MANKTVLFNKHLESDAKMVDFHGWDMPLNYGSQIEEHHAVRQDAGMFDVSHMTVVDVNGTDACAFLRKLLANDVAKLKVPGKALYGGMLDHNAGVIDDLITYYLNDTHYRIVVNSATREKDLAWIAQEVKGFDVVITERPELAMIAVQGPNAKAKAASVFNTAQNAAVEGMKPFFGVQADSLFIATTGYTGETGYEIIVPDSEAEALWLALLEAGVKPCGLGARDTLRLEAGMNLYGLDMDESVNPLAANMGWTIAWEPADRNFNGREALAAIKAAGTEKMVGLIMEAKGVIRPGMSVFFSDSDGVEQQGTITSGTFSPTLGYSIAMARVPRSIADTAEVEMRKKRVPVKVIAPSFVRNGKQAF.

This sequence belongs to the GcvT family. As to quaternary structure, the glycine cleavage system is composed of four proteins: P, T, L and H.

It carries out the reaction N(6)-[(R)-S(8)-aminomethyldihydrolipoyl]-L-lysyl-[protein] + (6S)-5,6,7,8-tetrahydrofolate = N(6)-[(R)-dihydrolipoyl]-L-lysyl-[protein] + (6R)-5,10-methylene-5,6,7,8-tetrahydrofolate + NH4(+). The glycine cleavage system catalyzes the degradation of glycine. This is Aminomethyltransferase from Shewanella woodyi (strain ATCC 51908 / MS32).